Consider the following 61-residue polypeptide: Photosystem II reaction center protein K (61 aa).

Positions 1-24 (MLNIFCLICICLNSTLYSSSFFFA) are excised as a propeptide. A helical membrane pass occupies residues 32–52 (FFNPIIDVMPIIPVLFFLLAF).

It belongs to the PsbK family. PSII is composed of 1 copy each of membrane proteins PsbA, PsbB, PsbC, PsbD, PsbE, PsbF, PsbH, PsbI, PsbJ, PsbK, PsbL, PsbM, PsbT, PsbX, PsbY, PsbZ, Psb30/Ycf12, at least 3 peripheral proteins of the oxygen-evolving complex and a large number of cofactors. It forms dimeric complexes.

Its subcellular location is the plastid. It is found in the chloroplast thylakoid membrane. One of the components of the core complex of photosystem II (PSII). PSII is a light-driven water:plastoquinone oxidoreductase that uses light energy to abstract electrons from H(2)O, generating O(2) and a proton gradient subsequently used for ATP formation. It consists of a core antenna complex that captures photons, and an electron transfer chain that converts photonic excitation into a charge separation. This is Photosystem II reaction center protein K from Phalaenopsis aphrodite subsp. formosana (Moth orchid).